The following is a 143-amino-acid chain: Peptide methionine sulfoxide reductase MsrB (143 aa).

The MsrB domain maps to 16–139; that stretch reads DAELRRRLTP…NSAALNFESR (124 aa). Zn(2+)-binding residues include Cys55, Cys58, Cys104, and Cys107. The active-site Nucleophile is the Cys128.

It belongs to the MsrB Met sulfoxide reductase family. Zn(2+) serves as cofactor.

The catalysed reaction is L-methionyl-[protein] + [thioredoxin]-disulfide + H2O = L-methionyl-(R)-S-oxide-[protein] + [thioredoxin]-dithiol. The polypeptide is Peptide methionine sulfoxide reductase MsrB (Burkholderia multivorans (strain ATCC 17616 / 249)).